Consider the following 805-residue polypeptide: MLNYNHNQIEKKWQDYWDENKTFKTNDNLGQKKFYALDMFPYPSGAGLHVGHPEGYTATDIISRYKRMQGYNVLHPMGWDAFGLPAEQYALDTGNDPREFTKKNIQTFKRQIKELGFSYDWDREVNTTDPEYYKWTQWIFIQLYNKGLAYVDEVAVNWCPALGTVLSNEEVIDGVSERGGHPVYRKPMKQWVLKITEYADQLLADLDDLDWPESLKDMQRNWIGRSEGAKVSFDVDNTEGKVEVFTTRPDTIYGASFLVLSPEHALVNSITTDEYKEKVKAYQTEASKKSDLERTDLAKDKSGVFTGAYATNPLSGEKVQIWIADYVLSTYGTGAIMAVPAHDDRDYEFAKKFDLPIIEVIEGGNVEEAAYTGEGKHINSGELDGLENEAAITKAIQLLEQKGAGEKKVNYKLRDWLFSRQRYWGEPIPVIHWEDGTMTTVPEEELPLLLPETDEIKPSGTGESPLANIDSFVNVVDEKTGMKGRRETNTMPQWAGSCWYYLRYIDPKNENMLADPEKLKHWLPVDLYIGGVEHAVLHLLYARFWHKVLYDLAIVPTKEPFQKLFNQGMILGEGNEKMSKSKGNVINPDDIVQSHGADTLRLYEMFMGPLDAAIAWSEKGLDGSRRFLDRVWRLMVNEDGTLSSKIVTTNNKSLDKVYNQTVKKVTEDFETLGFNTAISQLMVFINECYKVDEVYKPYIEGFVKMLAPIAPHIGEELWSKLGHEESITYQPWPTYDEALLVDDEVEIVVQVNGKLRAKIKIAKDTSKEEMQEIALSNDNVKASIEGKDIMKVIAVPQKLVNIVAK.

Residues 41 to 52 (PYPSGAGLHVGH) carry the 'HIGH' region motif. The 'KMSKS' region motif lies at 577–581 (KMSKS). ATP is bound at residue lysine 580.

Belongs to the class-I aminoacyl-tRNA synthetase family.

Its subcellular location is the cytoplasm. It carries out the reaction tRNA(Leu) + L-leucine + ATP = L-leucyl-tRNA(Leu) + AMP + diphosphate. The sequence is that of Leucine--tRNA ligase from Staphylococcus aureus (strain USA300).